A 292-amino-acid polypeptide reads, in one-letter code: ATP phosphoribosyltransferase (292 aa).

Belongs to the ATP phosphoribosyltransferase family. Long subfamily. The cofactor is Mg(2+).

It is found in the cytoplasm. It carries out the reaction 1-(5-phospho-beta-D-ribosyl)-ATP + diphosphate = 5-phospho-alpha-D-ribose 1-diphosphate + ATP. It participates in amino-acid biosynthesis; L-histidine biosynthesis; L-histidine from 5-phospho-alpha-D-ribose 1-diphosphate: step 1/9. With respect to regulation, feedback inhibited by histidine. Functionally, catalyzes the condensation of ATP and 5-phosphoribose 1-diphosphate to form N'-(5'-phosphoribosyl)-ATP (PR-ATP). Has a crucial role in the pathway because the rate of histidine biosynthesis seems to be controlled primarily by regulation of HisG enzymatic activity. In Thermodesulfovibrio yellowstonii (strain ATCC 51303 / DSM 11347 / YP87), this protein is ATP phosphoribosyltransferase.